We begin with the raw amino-acid sequence, 212 residues long: Dephospho-CoA kinase (212 aa).

One can recognise a DPCK domain in the interval 3–207 (IIGLTGGIAS…RHLADDPEPG (205 aa)). ATP is bound at residue 11 to 16 (ASGKST).

Belongs to the CoaE family.

It is found in the cytoplasm. It carries out the reaction 3'-dephospho-CoA + ATP = ADP + CoA + H(+). It participates in cofactor biosynthesis; coenzyme A biosynthesis; CoA from (R)-pantothenate: step 5/5. Its function is as follows. Catalyzes the phosphorylation of the 3'-hydroxyl group of dephosphocoenzyme A to form coenzyme A. This is Dephospho-CoA kinase from Moorella thermoacetica (strain ATCC 39073 / JCM 9320).